Here is a 185-residue protein sequence, read N- to C-terminus: Pyridoxal 5'-phosphate synthase subunit PdxT (185 aa).

Residue 46 to 48 (GES) coordinates L-glutamine. The active-site Nucleophile is Cys75. L-glutamine is bound by residues Arg101 and 129-130 (IR). Residues His165 and Glu167 each act as charge relay system in the active site.

It belongs to the glutaminase PdxT/SNO family. In the presence of PdxS, forms a dodecamer of heterodimers. Only shows activity in the heterodimer.

The enzyme catalyses aldehydo-D-ribose 5-phosphate + D-glyceraldehyde 3-phosphate + L-glutamine = pyridoxal 5'-phosphate + L-glutamate + phosphate + 3 H2O + H(+). It carries out the reaction L-glutamine + H2O = L-glutamate + NH4(+). It participates in cofactor biosynthesis; pyridoxal 5'-phosphate biosynthesis. Its function is as follows. Catalyzes the hydrolysis of glutamine to glutamate and ammonia as part of the biosynthesis of pyridoxal 5'-phosphate. The resulting ammonia molecule is channeled to the active site of PdxS. This chain is Pyridoxal 5'-phosphate synthase subunit PdxT, found in Staphylococcus epidermidis (strain ATCC 12228 / FDA PCI 1200).